The following is a 596-amino-acid chain: SUN domain-containing protein 4 (596 aa).

A helical transmembrane segment spans residues 28 to 48 (VSLSLVFLIWGLVFLSTLWIS). 2 disordered regions span residues 58-98 (LVDS…LSSD) and 139-158 (KQSEINNNTVPGNDTETTGS). Positions 66–77 (EPDDERADETAE) are enriched in acidic residues. Composition is skewed to polar residues over residues 80–95 (DATSLESTSVHSNPGL) and 141–158 (SEINNNTVPGNDTETTGS). In terms of domain architecture, SUN spans 179 to 343 (SNSRDKSLSG…SLLEVYGVDA (165 aa)). Residues 366 to 396 (DTEQKEKKTMQAKESFESDEDKSKQKEKEQE) show a composition bias toward basic and acidic residues. Positions 366 to 410 (DTEQKEKKTMQAKESFESDEDKSKQKEKEQEASPENAVVKDEVSL) are disordered. Residues 475–544 (ASKREKEVET…LERLEWMEKK (70 aa)) are a coiled coil. 2 helical membrane-spanning segments follow: residues 545–565 (GVVVFTICVGFGTIAVVAVVF) and 576–596 (GGLAWLLLLISSTFVMFILSL).

In terms of assembly, forms homomers and heteromers with SUN3. Interacts with SUN1, SUN2 and TIK.

Its subcellular location is the nucleus membrane. The protein resides in the endoplasmic reticulum membrane. Its function is as follows. Encodes a member of the mid-SUN subfamily of SUN-domain proteins that is localized to both the nuclear envelope and the ER. It is involved in early seed development and nuclear morphology. [TAIR]. The sequence is that of SUN domain-containing protein 4 from Arabidopsis thaliana (Mouse-ear cress).